The sequence spans 549 residues: Probable protein kinase UbiB (549 aa).

The Protein kinase domain maps to 123–501 (DFDDVPLASA…QHKAHKSNYL (379 aa)). ATP contacts are provided by residues 129 to 137 (LASASIAQV) and Lys152. The active-site Proton acceptor is the Asp287. 2 helical membrane passes run 498-517 (SNYL…ILFT) and 521-540 (TLWA…LLGW).

The protein belongs to the ABC1 family. UbiB subfamily.

Its subcellular location is the cell inner membrane. Its pathway is cofactor biosynthesis; ubiquinone biosynthesis [regulation]. Is probably a protein kinase regulator of UbiI activity which is involved in aerobic coenzyme Q (ubiquinone) biosynthesis. The protein is Probable protein kinase UbiB of Shewanella denitrificans (strain OS217 / ATCC BAA-1090 / DSM 15013).